The chain runs to 854 residues: MALEQALQAARQGELDVLRSLHAAGLLGPSLRDPLDALPVHHAARAGKLHCLRFLVEEAALPAAARARNGATPAHDASATGHLACLQWLLSQGGCRVQDKDNSGATVLHLAARFGHPEVVNWLLHHGGGDPTAATDMGALPIHYAAAKGDFPSLRLLVEHYPEGVNAQTKNGATPLYLACQEGHLEVTQYLVQECGADPHARAHDGMTPLHAAAQMGHSPVIVWLVSCTDVSLSEQDKDGATAMHFAASRGHTKVLSWLLLHGGEISADLWGGTPLHDAAENGELECCQILVVNGAELDVRDRDGYTAADLSDFNGHSHCTRYLRTVENLSVEHRVLSRDPSAELEAKQPDSGMSSPNTTVSVQPLNFDLSSPTSTLSNYDSCSSSHSSIKGQHPPCGLSSARAADIQSYMDMLNPELGLPRGTIGKPTPPPPPPSFPPPPPPPGTQLPPPPPGYPAPKPPVGPQAADIYMQTKNKLRHVETEALKKELSSCDGHDGLRRQDSSRKPRAFSKQPSTGDYYRQLGRCPGETLAARPGMAHSEEVRARQPARAGCPRLGPAARGSLEGPSAPPQAALLPGNHVPNGCAADPKASRELPPPPPPPPPPLPEAASSPPPAPPLPLESAGPGCGQRRSSSSTGSTKSFNMMSPTGDNSELLAEIKAGKSLKPTPQSKGLTTVFSGIGQPAFQPDSPLPSVSPALSPVRSPTPPAAGFQPLLNGSLVPVPPTTPAPGVQLDVEALIPTHDEQGRPIPEWKRQVMVRKMQLKMQEEEEQRRKEEEEEARLASMPAWRRDLLRKKLEEEREQKRKEEERQKQEELRREKEQSEKLRTLGYDESKLAPWQRQVILKKGDIAKY.

9 ANK repeats span residues 1–31 (MALEQALQAARQGELDVLRSLHAAGLLGPSL), 35–64 (LDALPVHHAARAGKLHCLRFLVEEAALPAA), 69–99 (NGATPAHDASATGHLACLQWLLSQGGCRVQD), 103–133 (SGATVLHLAARFGHPEVVNWLLHHGGGDPTA), 137–167 (MGALPIHYAAAKGDFPSLRLLVEHYPEGVNA), 171–201 (NGATPLYLACQEGHLEVTQYLVQECGADPHA), 205–235 (DGMTPLHAAAQMGHSPVIVWLVSCTDVSLSE), 239–268 (DGATAMHFAASRGHTKVLSWLLLHGGEISA), and 271–300 (WGGTPLHDAAENGELECCQILVVNGAELDV). Residues serine 338 and serine 342 each carry the phosphoserine modification. The span at 338 to 349 (SRDPSAELEAKQ) shows a compositional bias: basic and acidic residues. 5 disordered regions span residues 338–400 (SRDP…CGLS), 415–474 (NPEL…MQTK), 487–713 (KELS…AGFQ), 765–788 (KMQEEEEQRRKEEEEEARLASMPA), and 800–832 (EEREQKRKEEERQKQEELRREKEQSEKLRTLGY). The span at 352–377 (SGMSSPNTTVSVQPLNFDLSSPTSTL) shows a compositional bias: polar residues. Residues 378 to 389 (SNYDSCSSSHSS) show a composition bias toward low complexity. The segment covering 428–463 (PTPPPPPPSFPPPPPPPGTQLPPPPPGYPAPKPPVG) has biased composition (pro residues). Basic and acidic residues predominate over residues 487–505 (KELSSCDGHDGLRRQDSSR). The residue at position 515 (serine 515) is a Phosphoserine. Pro residues predominate over residues 595–620 (LPPPPPPPPPPLPEAASSPPPAPPLP). Residues 633-642 (SSSSTGSTKS) show a composition bias toward low complexity. Composition is skewed to polar residues over residues 643 to 652 (FNMMSPTGDN) and 667 to 678 (PTPQSKGLTTVF). Serine 647 is modified (phosphoserine). The WH2 domain maps to 651–668 (DNSELLAEIKAGKSLKPT). Residues serine 690 and serine 696 each carry the phosphoserine modification. Low complexity predominate over residues 692 to 703 (LPSVSPALSPVR). The stretch at 756 to 830 (QVMVRKMQLK…KEQSEKLRTL (75 aa)) forms a coiled coil.

As to quaternary structure, monomer. Binds F-actin in a Ca(2+)-resistant fashion. Interacts (via N-terminus) with BAIAP2 (via SH3-domain). Interacts with PFN2. Interacts with MYO3A (via C-terminus). Interacts with MYO3B (via C-terminus).

Its subcellular location is the cytoplasm. The protein resides in the cytoskeleton. The protein localises to the cell projection. It is found in the stereocilium. It localises to the microvillus. Functionally, multifunctional actin-bundling protein. Plays a major role in regulating the organization, dimension, dynamics and signaling capacities of the actin filament-rich microvilli in the mechanosensory and chemosensory cells. Required for the assembly and stabilization of the stereociliary parallel actin bundles. Plays a crucial role in the formation and maintenance of inner ear hair cell stereocilia. Involved in the elongation of actin in stereocilia. In extrastriolar hair cells, required for targeting MYO3B to stereocilia tips, and for regulation of stereocilia diameter and staircase formation. The protein is Espin (ESPN) of Homo sapiens (Human).